Reading from the N-terminus, the 344-residue chain is Photosystem II protein D1 (344 aa).

A run of 3 helical transmembrane segments spans residues 29–46 (YIGWFGVLMVPTLLTATT), 118–133 (HFFIGVCSYMGREWEL), and 142–156 (WIAVAYSAPVAAATA). H118 contributes to the chlorophyll a binding site. Y126 lines the pheophytin a pocket. [CaMn4O5] cluster contacts are provided by D170 and E189. Residues 197 to 218 (FHMLGVAGVFGGSLFSAMHGSL) form a helical membrane-spanning segment. H198 lines the chlorophyll a pocket. Residues H215 and 264–265 (SF) each bind a quinone. H215 lines the Fe cation pocket. H272 contacts Fe cation. The helical transmembrane segment at 274–288 (FLAAWPVIGIWFTAM) threads the bilayer. H332, E333, D342, and A344 together coordinate [CaMn4O5] cluster.

It belongs to the reaction center PufL/M/PsbA/D family. PSII is composed of 1 copy each of membrane proteins PsbA, PsbB, PsbC, PsbD, PsbE, PsbF, PsbH, PsbI, PsbJ, PsbK, PsbL, PsbM, PsbT, PsbY, PsbZ, Psb30/Ycf12, at least 3 peripheral proteins of the oxygen-evolving complex and a large number of cofactors. It forms dimeric complexes. The D1/D2 heterodimer binds P680, chlorophylls that are the primary electron donor of PSII, and subsequent electron acceptors. It shares a non-heme iron and each subunit binds pheophytin, quinone, additional chlorophylls, carotenoids and lipids. D1 provides most of the ligands for the Mn4-Ca-O5 cluster of the oxygen-evolving complex (OEC). There is also a Cl(-1) ion associated with D1 and D2, which is required for oxygen evolution. The PSII complex binds additional chlorophylls, carotenoids and specific lipids. is required as a cofactor. In terms of processing, tyr-161 forms a radical intermediate that is referred to as redox-active TyrZ, YZ or Y-Z.

The protein localises to the plastid. Its subcellular location is the chloroplast thylakoid membrane. The enzyme catalyses 2 a plastoquinone + 4 hnu + 2 H2O = 2 a plastoquinol + O2. Photosystem II (PSII) is a light-driven water:plastoquinone oxidoreductase that uses light energy to abstract electrons from H(2)O, generating O(2) and a proton gradient subsequently used for ATP formation. It consists of a core antenna complex that captures photons, and an electron transfer chain that converts photonic excitation into a charge separation. The D1/D2 (PsbA/PsbD) reaction center heterodimer binds P680, the primary electron donor of PSII as well as several subsequent electron acceptors. This Bigelowiella natans (Pedinomonas minutissima) protein is Photosystem II protein D1.